The following is a 315-amino-acid chain: DNA-directed RNA polymerase subunit alpha (315 aa).

The interval 1 to 228 (MLEIEKPVIQ…EHFKLFMTLT (228 aa)) is alpha N-terminal domain (alpha-NTD). An alpha C-terminal domain (alpha-CTD) region spans residues 245–315 (KEKALEMTIE…LGLNLRLNDE (71 aa)).

Belongs to the RNA polymerase alpha chain family. Homodimer. The RNAP catalytic core consists of 2 alpha, 1 beta, 1 beta' and 1 omega subunit. When a sigma factor is associated with the core the holoenzyme is formed, which can initiate transcription.

The enzyme catalyses RNA(n) + a ribonucleoside 5'-triphosphate = RNA(n+1) + diphosphate. DNA-dependent RNA polymerase catalyzes the transcription of DNA into RNA using the four ribonucleoside triphosphates as substrates. This is DNA-directed RNA polymerase subunit alpha from Clostridium perfringens (strain ATCC 13124 / DSM 756 / JCM 1290 / NCIMB 6125 / NCTC 8237 / Type A).